The following is a 75-amino-acid chain: Phi-liotoxin-Lw1a (75 aa).

An N-terminal signal peptide occupies residues 1 to 25 (MNFATKVSLLLLAIAVIVIVEGGEG). A propeptide spanning residues 26–39 (DSWFEEHEESDTER) is cleaved from the precursor. 2 disulfides stabilise this stretch: C50–C62 and C56–C68.

Expressed by the venom gland.

Its subcellular location is the secreted. Functionally, affects the activity of both ryanodine-sensitive calcium-release channels RyR1 and RyR2 with high potency. At lower concentrations the toxin increases full openings of the RyRs, and at higher concentrations it inhibits full openings and induce openings to subconductance levels and reduces the number of full conductance openings. The different actions may be attributed to the toxins binding at different sites on the RyRs, with binding at a high-affinity site mediating the increase in full openings and the induction of subconductance states evoked upon binding to a lower-affinity site. Insect-selective toxin that provokes a dose-dependent contractile paralysis in crickets and blowfly larvae, followed by death. This chain is Phi-liotoxin-Lw1a, found in Hormurus waigiensis (Australian rainforest scorpion).